We begin with the raw amino-acid sequence, 357 residues long: Phosphoribosylformylglycinamidine cyclo-ligase (357 aa).

Belongs to the AIR synthase family.

Its subcellular location is the cytoplasm. It catalyses the reaction 2-formamido-N(1)-(5-O-phospho-beta-D-ribosyl)acetamidine + ATP = 5-amino-1-(5-phospho-beta-D-ribosyl)imidazole + ADP + phosphate + H(+). Its pathway is purine metabolism; IMP biosynthesis via de novo pathway; 5-amino-1-(5-phospho-D-ribosyl)imidazole from N(2)-formyl-N(1)-(5-phospho-D-ribosyl)glycinamide: step 2/2. The sequence is that of Phosphoribosylformylglycinamidine cyclo-ligase from Rhizobium leguminosarum bv. trifolii (strain WSM2304).